A 150-amino-acid chain; its full sequence is Small ribosomal subunit protein eS19 (150 aa).

Belongs to the eukaryotic ribosomal protein eS19 family. Part of the 30S ribosomal subunit.

In terms of biological role, may be involved in maturation of the 30S ribosomal subunit. The sequence is that of Small ribosomal subunit protein eS19 (rps19e) from Pyrococcus abyssi (strain GE5 / Orsay).